A 390-amino-acid polypeptide reads, in one-letter code: UDP-galactose translocator (390 aa).

Positions Met-1–Glu-24 are disordered. 10 helical membrane-spanning segments follow: residues Ala-3–Leu-23, Tyr-37–Ala-57, Phe-65–Leu-85, Leu-97–Val-117, Thr-140–Leu-160, Trp-169–Gly-189, Gly-200–Phe-220, Leu-238–Val-258, Pro-269–Val-289, and Leu-315–Val-335. Positions Ser-9–Ala-22 are enriched in low complexity. The segment at Pro-356–Lys-390 is disordered.

This sequence belongs to the nucleotide-sugar transporter family. SLC35A subfamily. Interacts with SLC35A3; the interaction is reduced in the presence of SLC35A4. Found in a complex with SLC35A3 and SLC35A4.

It is found in the golgi apparatus membrane. It carries out the reaction UMP(out) + UDP-alpha-D-galactose(in) = UMP(in) + UDP-alpha-D-galactose(out). The enzyme catalyses UDP-N-acetyl-alpha-D-galactosamine(in) + UMP(out) = UDP-N-acetyl-alpha-D-galactosamine(out) + UMP(in). The catalysed reaction is UMP(out) + UDP-alpha-D-glucose(in) = UMP(in) + UDP-alpha-D-glucose(out). It catalyses the reaction UMP(out) + UDP-N-acetyl-alpha-D-glucosamine(in) = UMP(in) + UDP-N-acetyl-alpha-D-glucosamine(out). It carries out the reaction UDP-alpha-D-galactose(in) + AMP(out) = UDP-alpha-D-galactose(out) + AMP(in). The enzyme catalyses UDP-alpha-D-galactose(in) + CMP(out) = UDP-alpha-D-galactose(out) + CMP(in). The catalysed reaction is UDP-N-acetyl-alpha-D-galactosamine(out) + UDP-alpha-D-galactose(in) = UDP-N-acetyl-alpha-D-galactosamine(in) + UDP-alpha-D-galactose(out). It catalyses the reaction UDP-N-acetyl-alpha-D-glucosamine(out) + UDP-alpha-D-galactose(in) = UDP-N-acetyl-alpha-D-glucosamine(in) + UDP-alpha-D-galactose(out). It carries out the reaction UDP-alpha-D-galactose(in) + UDP-alpha-D-glucose(out) = UDP-alpha-D-galactose(out) + UDP-alpha-D-glucose(in). The enzyme catalyses UMP(out) + CMP(in) = UMP(in) + CMP(out). The catalysed reaction is UMP(out) + AMP(in) = UMP(in) + AMP(out). Transports uridine diphosphate galactose (UDP-galactose) from the cytosol into the Golgi apparatus. It functions as an antiporter that exchanges UDP-galactose for UMP. It is also able to exchange UDP-galactose for AMP and CMP, and to transport UDP-N-acetylgalactosamine (UDP-GalNAc) and other nucleotide sugars. As a provider of UDP-galactose to galactosyltransferases present in the Golgi apparatus, it is necessary for globotriaosylceramide/globoside (Gb3Cer) synthesis from lactosylceramide. This is UDP-galactose translocator from Mus musculus (Mouse).